A 260-amino-acid chain; its full sequence is Phosphate import ATP-binding protein PstB 1 (260 aa).

One can recognise an ABC transporter domain in the interval 13 to 255 (VRVRDLNLWY…PHTKKAEDYI (243 aa)). 45 to 52 (GPSGCGKS) is a binding site for ATP.

Belongs to the ABC transporter superfamily. Phosphate importer (TC 3.A.1.7) family. As to quaternary structure, the complex is composed of two ATP-binding proteins (PstB), two transmembrane proteins (PstC and PstA) and a solute-binding protein (PstS).

The protein resides in the cell inner membrane. The enzyme catalyses phosphate(out) + ATP + H2O = ADP + 2 phosphate(in) + H(+). Functionally, part of the ABC transporter complex PstSACB involved in phosphate import. Responsible for energy coupling to the transport system. The chain is Phosphate import ATP-binding protein PstB 1 from Chromohalobacter salexigens (strain ATCC BAA-138 / DSM 3043 / CIP 106854 / NCIMB 13768 / 1H11).